Consider the following 304-residue polypeptide: Non-specific ribonucleoside hydrolase RihC (304 aa).

H233 is an active-site residue.

It belongs to the IUNH family. RihC subfamily.

Hydrolyzes both purine and pyrimidine ribonucleosides with a broad-substrate specificity. This Shigella dysenteriae serotype 1 (strain Sd197) protein is Non-specific ribonucleoside hydrolase RihC.